The sequence spans 339 residues: UDP-N-acetylenolpyruvoylglucosamine reductase (339 aa).

Residues 19–189 (VDVRAQLFAE…LRVRFALNRV (171 aa)) enclose the FAD-binding PCMH-type domain. Arg-166 is a catalytic residue. The active-site Proton donor is Ser-239. Glu-335 is a catalytic residue.

Belongs to the MurB family. It depends on FAD as a cofactor.

It localises to the cytoplasm. It catalyses the reaction UDP-N-acetyl-alpha-D-muramate + NADP(+) = UDP-N-acetyl-3-O-(1-carboxyvinyl)-alpha-D-glucosamine + NADPH + H(+). It participates in cell wall biogenesis; peptidoglycan biosynthesis. Cell wall formation. In Pseudomonas fluorescens (strain Pf0-1), this protein is UDP-N-acetylenolpyruvoylglucosamine reductase.